The primary structure comprises 296 residues: MDELMGKCELLYEGKVREVYDCDDKLVMVATDRISAFDHILKNKVTEKGAILTQMSKFWFDYTKDVVANHMVSVDVNDMPEFFHKDEYIGRSMLCKKLTMLPVECIVRGYITGSGWASYKENGTVCGIKLPEGLKESEKLPEPIYTPSTKAEIGDHDENISFEKSIEVLEKQFPGKGLEYATKIKDATITLYKKCAEYALSKGIIIADTKFEFGLDENGEVVIGDEMLTPDSSRFWPLEGYEAGKSQPSYDKQFVRDWLKANPDSDYLLPDDVIEKTVEKYKEAYKLLTGKDFSRK.

This sequence belongs to the SAICAR synthetase family.

The enzyme catalyses 5-amino-1-(5-phospho-D-ribosyl)imidazole-4-carboxylate + L-aspartate + ATP = (2S)-2-[5-amino-1-(5-phospho-beta-D-ribosyl)imidazole-4-carboxamido]succinate + ADP + phosphate + 2 H(+). The protein operates within purine metabolism; IMP biosynthesis via de novo pathway; 5-amino-1-(5-phospho-D-ribosyl)imidazole-4-carboxamide from 5-amino-1-(5-phospho-D-ribosyl)imidazole-4-carboxylate: step 1/2. This chain is Phosphoribosylaminoimidazole-succinocarboxamide synthase, found in Lachnospira eligens (strain ATCC 27750 / DSM 3376 / VPI C15-48 / C15-B4) (Eubacterium eligens).